The chain runs to 159 residues: Eukaryotic translation initiation factor 5A-3 (159 aa).

Residues Met-1–Ala-12 show a composition bias toward basic and acidic residues. Residues Met-1–Pro-21 are disordered. Lys-52 is subject to Hypusine.

It belongs to the eIF-5A family. Lys-52 undergoes hypusination, a unique post-translational modification that consists in the addition of a butylamino group from spermidine to lysine side chain, leading to the formation of the unusual amino acid hypusine. eIF-5As are the only known proteins to undergo this modification, which is essential for their function.

Functionally, translation factor that promotes translation elongation and termination, particularly upon ribosome stalling at specific amino acid sequence contexts. Binds between the exit (E) and peptidyl (P) site of the ribosome and promotes rescue of stalled ribosome: specifically required for efficient translation of polyproline-containing peptides as well as other motifs that stall the ribosome. Acts as a ribosome quality control (RQC) cofactor by joining the RQC complex to facilitate peptidyl transfer during CAT tailing step. The chain is Eukaryotic translation initiation factor 5A-3 from Solanum lycopersicum (Tomato).